The following is a 183-amino-acid chain: Probable chorismate pyruvate-lyase (183 aa).

Substrate is bound by residues Arg-79, Leu-115, and Glu-168.

It belongs to the UbiC family.

Its subcellular location is the cytoplasm. The enzyme catalyses chorismate = 4-hydroxybenzoate + pyruvate. Its pathway is cofactor biosynthesis; ubiquinone biosynthesis. Its function is as follows. Removes the pyruvyl group from chorismate, with concomitant aromatization of the ring, to provide 4-hydroxybenzoate (4HB) for the ubiquinone pathway. The chain is Probable chorismate pyruvate-lyase from Chromohalobacter salexigens (strain ATCC BAA-138 / DSM 3043 / CIP 106854 / NCIMB 13768 / 1H11).